The chain runs to 448 residues: Trigger factor (448 aa).

The PPIase FKBP-type domain maps to 172–257 (GDRVTVDFVG…MKKIEWPHLP (86 aa)).

Belongs to the FKBP-type PPIase family. Tig subfamily.

The protein localises to the cytoplasm. The catalysed reaction is [protein]-peptidylproline (omega=180) = [protein]-peptidylproline (omega=0). Its function is as follows. Involved in protein export. Acts as a chaperone by maintaining the newly synthesized protein in an open conformation. Functions as a peptidyl-prolyl cis-trans isomerase. This chain is Trigger factor, found in Paraburkholderia phymatum (strain DSM 17167 / CIP 108236 / LMG 21445 / STM815) (Burkholderia phymatum).